The sequence spans 551 residues: Inosine-5'-monophosphate dehydrogenase (551 aa).

CBS domains follow at residues 102–163 and 165–221; these read FILD…PLSE and MTSD…PLAS. NAD(+)-binding positions include 258–260 and 308–310; these read DSS and GMG. K(+)-binding residues include Gly310 and Gly312. Ser313 contributes to the IMP binding site. Position 315 (Cys315) interacts with K(+). Residue Cys315 is the Thioimidate intermediate of the active site. IMP contacts are provided by residues 349-351, 372-373, and 396-400; these read DGG, GS, and YRGMG. Positions 407-462 are disordered; sequence AGTRRTASPPARGLRSPEASPSTAASSGGASRASALSEASPSAKSEASRTSTSTGS. Over residues 422–462 the composition is skewed to low complexity; the sequence is SPEASPSTAASSGGASRASALSEASPSAKSEASRTSTSTGS. The active-site Proton acceptor is the Arg465. Gln477 lines the IMP pocket. K(+) contacts are provided by Glu536 and Gly537.

Belongs to the IMPDH/GMPR family. In terms of assembly, homotetramer. Requires K(+) as cofactor.

The protein resides in the cytoplasm. It carries out the reaction IMP + NAD(+) + H2O = XMP + NADH + H(+). Its pathway is purine metabolism; XMP biosynthesis via de novo pathway; XMP from IMP: step 1/1. With respect to regulation, mycophenolic acid (MPA) is a non-competitive inhibitor that prevents formation of the closed enzyme conformation by binding to the same site as the amobile flap. In contrast, mizoribine monophosphate (MZP) is a competitive inhibitor that induces the closed conformation. MPA is a potent inhibitor of mammalian IMPDHs but a poor inhibitor of the bacterial enzymes. MZP is a more potent inhibitor of bacterial IMPDH. Potently inhibited by MPA and adenine dinucleotide analogs such as thiazole-4-carboxamide adenine dinucleotide (TAD). Its function is as follows. Catalyzes the conversion of inosine 5'-phosphate (IMP) to xanthosine 5'-phosphate (XMP), the first committed and rate-limiting step in the de novo synthesis of guanine nucleotides, and therefore plays an important role in the regulation of cell growth. The protein is Inosine-5'-monophosphate dehydrogenase of Toxoplasma gondii.